Consider the following 184-residue polypeptide: MVSMLLVGRIGKSVGLNGGLRLHLESDFPECLKKGVKVSVAPLNAFSCVSSFKEYIIHSYEHAKNLLFLETIQTPEKAKELTNLGLFMSEAESKKLCVLKEGEFFYCDLVGLSVVEENEILGKVIEIQRISQTDYFLVETTLNLVEKGLAKIFLIPYRDFYIQEILLQDKKITTHNAKTLLENS.

One can recognise a PRC barrel domain in the interval 101–180; sequence EGEFFYCDLV…KITTHNAKTL (80 aa).

The protein belongs to the RimM family. As to quaternary structure, binds ribosomal protein uS19.

It is found in the cytoplasm. An accessory protein needed during the final step in the assembly of 30S ribosomal subunit, possibly for assembly of the head region. Essential for efficient processing of 16S rRNA. May be needed both before and after RbfA during the maturation of 16S rRNA. It has affinity for free ribosomal 30S subunits but not for 70S ribosomes. The chain is Ribosome maturation factor RimM from Helicobacter pylori (strain ATCC 700392 / 26695) (Campylobacter pylori).